We begin with the raw amino-acid sequence, 148 residues long: MADQLTDDQISEFKEAFSLFDKDGDGCITTKELGTVMRSLGQNPTEAELQDMINEVDRDGNGTIDFPEFLNLMARKMKDTDSEEELKEAFRVFDKDQNGFISAAELRHVMTNLGEKLTDEVDEMIREADVDGDGQINYEEFVKVMMAK.

Alanine 2 is subject to N-acetylalanine. EF-hand domains follow at residues 8 to 43 (DQIS…LGQN), 44 to 79 (PTEA…KMKD), 81 to 116 (DSEE…LGEK), and 116 to 148 (KLTD…MMAK). Positions 21, 23, 25, 27, 32, 57, 59, 61, 63, 68, 94, 96, 98, and 105 each coordinate Ca(2+). Position 116 is an N6,N6,N6-trimethyllysine (lysine 116). Ca(2+) contacts are provided by aspartate 129, aspartate 131, aspartate 133, glutamine 135, and glutamate 140.

The protein belongs to the calmodulin family.

Its function is as follows. Calmodulin mediates the control of a large number of enzymes, ion channels and other proteins by Ca(2+). Among the enzymes to be stimulated by the calmodulin-Ca(2+) complex are a number of protein kinases and phosphatases. The sequence is that of Calmodulin (CAMF1) from Fagus sylvatica (Beechnut).